The primary structure comprises 278 residues: MEVRQSIHSDHAKQLDTAGLRREFLIDTVFDADRYTMVYSHIDRIIVGGIMPVTQSVSIGNEVGKQLGVGYFLERRELGVINIGGPGTIDVDGKCYEIGPREALYVGQGARDLRFASLDSACPAKFYYNCAPAHTHYPNRKITPAEVSPQTLGDTKSSNRRTINKYMVPEVLPTCQLSMGLTELEEGNLWNTMPCHTHERRMEVYFYFNMAPDSCVFHMMGEPQETRHIVMRNEQAVISPSWSIHSGVGTRAYTFIWGMVGENQVFDDMDHLAITDLR.

The Zn(2+) site is built by His-196, His-198, Glu-203, and His-245.

This sequence belongs to the KduI family. Zn(2+) is required as a cofactor.

The catalysed reaction is 5-dehydro-4-deoxy-D-glucuronate = 3-deoxy-D-glycero-2,5-hexodiulosonate. Its pathway is glycan metabolism; pectin degradation; 2-dehydro-3-deoxy-D-gluconate from pectin: step 4/5. Its function is as follows. Catalyzes the isomerization of 5-dehydro-4-deoxy-D-glucuronate to 3-deoxy-D-glycero-2,5-hexodiulosonate. In Edwardsiella ictaluri (strain 93-146), this protein is 4-deoxy-L-threo-5-hexosulose-uronate ketol-isomerase.